Reading from the N-terminus, the 122-residue chain is Large ribosomal subunit protein uL14c (122 aa).

The protein belongs to the universal ribosomal protein uL14 family. As to quaternary structure, part of the 50S ribosomal subunit.

The protein resides in the plastid. It is found in the chloroplast. In terms of biological role, binds to 23S rRNA. In Ipomoea purpurea (Common morning glory), this protein is Large ribosomal subunit protein uL14c.